The following is a 241-amino-acid chain: Accessory protein p30II (241 aa).

Short sequence motifs (nuclear localization signal) lie at residues R73 to R78 and G91 to R98. A disordered region spans residues A86–L153. Positions P107–G138 are enriched in low complexity. A Mitochondrial targeting signal motif is present at residues L175–R184.

Belongs to the HTLV-1 accessory protein p30II family. In terms of assembly, p30II binds to the KIX domains of CREBBP and EP300.

Its subcellular location is the host nucleus. The protein resides in the host nucleolus. It localises to the host mitochondrion inner membrane. Its function is as follows. p30II is a multifunctional regulator that sequesters EP300/CREBBP and down-regulates CREB-responsive element (CRE) and Tax-responsive element (TRE) mediated transcription. Specifically binds and represses tax/rex mRNA nuclear export. Since Tax and Rex are positive regulators of viral gene expression, their inhibition by p30II reduces virion production, and allows the virus to escape the host immune surveillance and persist latently in an immune-competent host. P13II increases mitochondrial permeability to monovalent cations, producing a rapid, membrane potential-dependent influx of potassium. This could involve a channel-forming activity. Interferes with cell proliferation and transformation and promotes apoptosis induced by ceramide and Fas ligand, probably using the Ras signaling. This is Accessory protein p30II from Human T-cell leukemia virus 1 (isolate Caribbea HS-35 subtype A) (HTLV-1).